We begin with the raw amino-acid sequence, 208 residues long: Adenylyl-sulfate kinase 3 (208 aa).

Position 37–45 (glycine 37–threonine 45) interacts with ATP. Substrate is bound by residues aspartate 67, arginine 70, arginine 84, asparagine 87, isoleucine 110–serine 111, and glycine 160. Residue serine 111 is the Phosphoserine intermediate of the active site.

The protein belongs to the APS kinase family. Expressed in root vasculature, root tips, leaf epidermal and guard cells, pollen grains and radicle of immature seeds.

The protein localises to the cytoplasm. It is found in the cytosol. The enzyme catalyses adenosine 5'-phosphosulfate + ATP = 3'-phosphoadenylyl sulfate + ADP + H(+). It functions in the pathway sulfur metabolism; hydrogen sulfide biosynthesis; sulfite from sulfate: step 2/3. Its function is as follows. Catalyzes the synthesis of activated sulfate for the sulfation of secondary metabolites, including the glucosinolates. Essential for plant reproduction and viability. This chain is Adenylyl-sulfate kinase 3, found in Arabidopsis thaliana (Mouse-ear cress).